The primary structure comprises 322 residues: Epoxide hydrolase A (322 aa).

The AB hydrolase-1 domain occupies Pro-27–Leu-131. The active-site Nucleophile is the Asp-103. The active-site Proton acceptor is the His-298.

It belongs to the AB hydrolase superfamily. Epoxide hydrolase family. Homodimer.

The enzyme catalyses an epoxide + H2O = an ethanediol. Could be involved in detoxification of extraneous host-cell epoxides. Catalyzes the hydrolysis of epoxide-containing substrates. The polypeptide is Epoxide hydrolase A (ephA) (Mycobacterium tuberculosis (strain ATCC 25618 / H37Rv)).